The primary structure comprises 644 residues: Beta-mannosyltransferase 2 (644 aa).

Topologically, residues 1-6 (MRTRLN) are cytoplasmic. Residues 7 to 27 (FLLLCIASVLSVIWIGVLLTW) traverse the membrane as a helical segment. Residues 28–644 (NDNNLGGISL…NDKKDLKIRQ (617 aa)) lie on the Extracellular side of the membrane. Asparagine 484 is a glycosylation site (N-linked (GlcNAc...) asparagine). The stretch at 512-644 (TRGEAERRRR…NDKKDLKIRQ (133 aa)) forms a coiled coil. The tract at residues 517–644 (ERRRRVAEER…NDKKDLKIRQ (128 aa)) is disordered.

The protein belongs to the BMT family.

The protein localises to the membrane. Beta-mannosyltransferase involved in cell wall biosynthesis. Initiates the beta-mannosylation of core N-linked glycans. This Komagataella phaffii (strain GS115 / ATCC 20864) (Yeast) protein is Beta-mannosyltransferase 2 (BMT2).